A 196-amino-acid polypeptide reads, in one-letter code: Large ribosomal subunit protein eL15 (196 aa).

The tract at residues 156 to 196 is disordered; that stretch reads HRGRAERGKTSAGRKGRGMRTRGRGTEKTRPSIRSHANQGK. The segment covering 167–178 has biased composition (basic residues); the sequence is AGRKGRGMRTRG.

This sequence belongs to the eukaryotic ribosomal protein eL15 family.

The protein is Large ribosomal subunit protein eL15 of Methanoregula boonei (strain DSM 21154 / JCM 14090 / 6A8).